A 537-amino-acid polypeptide reads, in one-letter code: 2-succinyl-5-enolpyruvyl-6-hydroxy-3-cyclohexene-1-carboxylate synthase (537 aa).

It belongs to the TPP enzyme family. MenD subfamily. Homodimer. It depends on Mg(2+) as a cofactor. Requires Mn(2+) as cofactor. Thiamine diphosphate is required as a cofactor.

It carries out the reaction isochorismate + 2-oxoglutarate + H(+) = 5-enolpyruvoyl-6-hydroxy-2-succinyl-cyclohex-3-ene-1-carboxylate + CO2. It participates in quinol/quinone metabolism; 1,4-dihydroxy-2-naphthoate biosynthesis; 1,4-dihydroxy-2-naphthoate from chorismate: step 2/7. The protein operates within quinol/quinone metabolism; menaquinone biosynthesis. In terms of biological role, catalyzes the thiamine diphosphate-dependent decarboxylation of 2-oxoglutarate and the subsequent addition of the resulting succinic semialdehyde-thiamine pyrophosphate anion to isochorismate to yield 2-succinyl-5-enolpyruvyl-6-hydroxy-3-cyclohexene-1-carboxylate (SEPHCHC). The chain is 2-succinyl-5-enolpyruvyl-6-hydroxy-3-cyclohexene-1-carboxylate synthase from Rhodococcus erythropolis (strain PR4 / NBRC 100887).